A 176-amino-acid chain; its full sequence is RNA pyrophosphohydrolase (176 aa).

The 144-residue stretch at 6–149 folds into the Nudix hydrolase domain; it reads GYRPNVGIVI…KRDVYRRVMK (144 aa). The short motif at 38–59 is the Nudix box element; sequence GGINPGESAEQAMYRELFEEVG.

The protein belongs to the Nudix hydrolase family. RppH subfamily. A divalent metal cation serves as cofactor.

Functionally, accelerates the degradation of transcripts by removing pyrophosphate from the 5'-end of triphosphorylated RNA, leading to a more labile monophosphorylated state that can stimulate subsequent ribonuclease cleavage. This is RNA pyrophosphohydrolase from Salmonella paratyphi C (strain RKS4594).